We begin with the raw amino-acid sequence, 567 residues long: MASAALICGTEQWKALQAHVGAIQKTHLRDLMADADRCKAMTAEYEGIFLDYSRQQATGETMEKLLKLADAAKLKEKIEKMFKGEKINSTENRSVLHVALRAPRDAVINSDGVNVVPEVWSVKDKIKQFSETFRSGSWVGATGKPLTNVVSVGIGGSFLGPLFVHTALQTDPEAAECAKGRQLRFLANVDPVDVARSIKDLDPETTLVVVVSKTFTTAETMLNARTLKEWIVSSLGPQAVAKHMIAVSTNLKLVKEFGIDPNNAFAFWDWVGGRYSVCSAVGVLPLSLQYGFPIVQKFLEGASSIDNHFYSSSFEKNIPVLLGLLSVWNVSFLGYPARAILPYSQALEKLAPHIQQLSMESNGKGVSIDGAQLSFETGEIDFGEPGTNGQHSFYQLIHQGRVIPCDFIGVVKSQQPVYLKGETVSNHDELMSNFFAQPDALAYGKTPEQLHSEKVPENLIPHKTFKGNRPSLSLLLPTLSAYEVGQLLSIYEHRIAVQGFIWGINSFDQWGVELGKSLASQVRKQLHGTRMEGKPVEGFNHSTSSLLARYLAVKPSTPYDTTVLPKV.

The Proton donor role is filled by Glu360. Residues His391 and Lys516 contribute to the active site.

The protein belongs to the GPI family. As to quaternary structure, homodimer.

Its subcellular location is the cytoplasm. It carries out the reaction alpha-D-glucose 6-phosphate = beta-D-fructose 6-phosphate. It participates in carbohydrate degradation; glycolysis; D-glyceraldehyde 3-phosphate and glycerone phosphate from D-glucose: step 2/4. The sequence is that of Glucose-6-phosphate isomerase, cytosolic (PHI1) from Zea mays (Maize).